The following is a 161-amino-acid chain: Cell division control protein 31 (161 aa).

4 consecutive EF-hand domains span residues 20–55 (EQKQ…LGFE), 56–91 (LPKR…KILK), 93–128 (DPLD…LGET), and 129–161 (LTDE…CTDS). 4 residues coordinate Ca(2+): Asp33, Asn35, Asp37, and Glu44. Phosphothreonine is present on Thr130. Ca(2+)-binding residues include Asp142, Asp144, Asp146, Glu148, and Glu153.

This sequence belongs to the centrin family. As to quaternary structure, component of the spindle pole body (SPB), acting as the connector of microtubule arrays in the cytoplasm and the nucleoplasm, is involved in nuclear positioning before chromosome segregation, SPB separation, spindle formation, chromosome segregation, nuclear migration into the bud, nuclear reorientation after cytokinesis and nuclear fusion during conjugation. The SPB half-bridge, which is tightly associated with the cytoplasmic side of the nuclear envelope and the SPB, is playing a key role as the starting structure for and in the initiation of SPB duplication in G1. At the SPB half-bridge CDC31 interacts with KAR1, MPS3 and SFI1. Interacts with KIC1. Interacts with VPS13. Associates with nuclear pore complexes (NPCs).

The protein localises to the nucleus envelope. It is found in the cytoplasm. The protein resides in the cytoskeleton. It localises to the microtubule organizing center. Its subcellular location is the spindle pole body. In terms of biological role, functions as a component of the spindle pole body (SPB) half-bridge. At the SPB, it is recruited by KAR1 and MPS3 to the SPB half-bridge and involved in the initial steps of SPB duplication. Also involved in connection with the protein kinase KIC1 in the maintenance of cell morphology and integrity. May play a role in vesicle-mediated transport, in a VPS13-dependent manner. In Saccharomyces cerevisiae (strain ATCC 204508 / S288c) (Baker's yeast), this protein is Cell division control protein 31 (CDC31).